The sequence spans 266 residues: CAAX prenyl protease 2 (266 aa).

A run of 3 helical transmembrane segments spans residues 1–21 (MGAG…VHLF), 42–59 (LLSN…LRDY), and 78–98 (ITYP…MMQI). Active-site proton donor/acceptor residues include Glu-131 and His-164. The next 3 helical transmembrane spans lie at 186 to 206 (GFQF…QLTT), 210 to 230 (IVPI…WLEI), and 239 to 259 (RLTL…LLYT).

It belongs to the peptidase U48 family.

The protein localises to the endoplasmic reticulum membrane. It localises to the membrane. It catalyses the reaction Hydrolyzes the peptide bond -P2-(S-farnesyl or geranylgeranyl)C-P1'-P2'-P3'-COOH where P1' and P2' are amino acids with aliphatic sidechains and P3' is any C-terminal residue.. In terms of biological role, protease involved in the processing of a variety of prenylated proteins containing the C-terminal CAAX motif, where C is a cysteine modified with an isoprenoid lipid, A is an aliphatic amino acid and X is any C-terminal amino acid. Proteolytically removes the C-terminal three residues of farnesylated and geranylated proteins, leaving the prenylated cysteine as the new C-terminus. The sequence is that of CAAX prenyl protease 2 from Caenorhabditis elegans.